Reading from the N-terminus, the 180-residue chain is MEYKTPFIAKKLGVSPKAVVRIAQQLNLTIEKNKYGHFIFTQDDLDQMLEYHLSQIEKSQNTHPTQKTSSNDVEELKTQVNTIVQNISSHDFEQLTAQLNTITRRLDRMEEQMQDKANDVVTYQLLQHRREMEEMLERIQKLEATLKKEEPIYITPDTKPIYEREKKPKRRKMIFSIFGL.

The segment at residues 5-25 (TPFIAKKLGVSPKAVVRIAQQ) is a DNA-binding region (H-T-H motif). The stretch at 89–151 (SHDFEQLTAQ…LEATLKKEEP (63 aa)) forms a coiled coil.

Belongs to the RacA family.

It localises to the cytoplasm. Required for the formation of axial filaments and for anchoring the origin regions at the cell poles in sporulating cells, thus ensuring proper chromosome segregation in the prespore. Binds in a dispersed manner throughout the chromosome but preferentially to sites clustered in the origin portion of the chromosome, causing condensation of the chromosome and its remodeling into an elongated, anchored structure. This chain is Chromosome-anchoring protein RacA, found in Bacillus cereus (strain ATCC 10987 / NRS 248).